The primary structure comprises 345 residues: uncharacterized protein (345 aa).

The 198-residue stretch at Met-1–Glu-198 folds into the CNNM transmembrane domain. 2 consecutive transmembrane segments (helical) span residues Val-3–Ala-23 and Val-95–Leu-115. CBS domains follow at residues Ala-217–Val-280 and Val-285–Gly-342. The helical transmembrane segment at Leu-312–Val-332 threads the bilayer.

It belongs to the TerC family.

Its subcellular location is the cell membrane. This is an uncharacterized protein from Mycobacterium tuberculosis (strain ATCC 25618 / H37Rv).